Here is a 529-residue protein sequence, read N- to C-terminus: MLSLVGRVASASASGALRGLSPSAALPQAQLLLRAAPAGVHPARDYAAQASAAPKAGTATGRIVAVIGAVVDVQFDEGLPPILNALEVQGRDSRLVLEVAQHLGESTVRTIAMDGTEGLVRGQKVLDSGAPIKIPVGPETLGRIMNVIGEPIDERGPIKTKQFAPIHAEAPEFIEMSVEQEILVTGIKVVDLLAPYAKGGKIGLFGGAGVGKTVLIMELINNVAKAHGGYSVFAGVGERTREGNDLYHEMIESGVINLKDATSKVALVYGQMNEPPGARARVALTGLTVAEYFRDQEGQDVLLFIDNIFRFTQAGSEVSALLGRIPSAVGYQPTLATDMGTMQERITTTKKGSITSVQAIYVPADDLTDPAPATTFAHLDATTVLSRAIAELGIYPAVDPLDSTSRIMDPNIVGNEHYDVARGVQKILQDYKSLQDIIAILGMDELSEEDKLTVSRARKIQRFLSQPFQVAEVFTGHMGKLVPLKETIKGFQQILAGEYDHLPEQAFYMVGPIEEAVAKADKLAEEHGS.

The transit peptide at 1–46 (MLSLVGRVASASASGALRGLSPSAALPQAQLLLRAAPAGVHPARDY) directs the protein to the mitochondrion. An O-linked (GlcNAc) serine glycan is attached at serine 106. Lysine 124, lysine 133, and lysine 161 each carry N6-acetyllysine; alternate. An N6-succinyllysine; alternate mark is found at lysine 124, lysine 133, and lysine 161. Residue lysine 198 is modified to N6-acetyllysine. Residues glycine 209, valine 210, glycine 211, lysine 212, threonine 213, and valine 214 each contribute to the ADP site. Glycine 209 serves as a coordination point for ATP. Glycine 209, valine 210, glycine 211, lysine 212, and threonine 213 together coordinate phosphate. Positions 211, 212, 213, and 214 each coordinate ATP. Threonine 213 serves as a coordination point for Mg(2+). Glutamate 238 contributes to the Mg(2+) binding site. Arginine 239 is a binding site for ATP. Lysine 259 and lysine 264 each carry N6-acetyllysine; alternate. N6-succinyllysine; alternate is present on residues lysine 259 and lysine 264. Threonine 312 bears the Phosphothreonine mark. An N6-acetyllysine modification is found at lysine 426. Serine 433 is modified (phosphoserine). Residues lysine 480 and lysine 485 each carry the N6-acetyllysine modification. Lysine 522 carries the post-translational modification N6-acetyllysine; alternate. N6-succinyllysine; alternate is present on lysine 522. A Phosphoserine modification is found at serine 529.

This sequence belongs to the ATPase alpha/beta chains family. In terms of assembly, homotrimer. Component of the ATP synthase complex composed at least of ATP5F1A/subunit alpha, ATP5F1B/subunit beta, ATP5MC1/subunit c (homooctomer), MT-ATP6/subunit a, MT-ATP8/subunit 8, ATP5ME/subunit e, ATP5MF/subunit f, ATP5MG/subunit g, ATP5MK/subunit k, ATP5MJ/subunit j, ATP5F1C/subunit gamma, ATP5F1D/subunit delta, ATP5F1E/subunit epsilon, ATP5PF/subunit F6, ATP5PB/subunit b, ATP5PD/subunit d, ATP5PO/subunit OSCP. ATP synthase complex consists of a soluble F(1) head domain (subunits alpha(3) and beta(3)) - the catalytic core - and a membrane F(0) domain - the membrane proton channel (subunits c, a, 8, e, f, g, k and j). These two domains are linked by a central stalk (subunits gamma, delta, and epsilon) rotating inside the F1 region and a stationary peripheral stalk (subunits F6, b, d, and OSCP). Interacts with PPIF. Interacts with BCL2L1 isoform BCL-X(L); the interaction mediates the association of BCL2L1 isoform BCL-X(L) with the mitochondrial membrane F(1)F(0) ATP synthase and enhances neurons metabolic efficiency. Interacts with CLN5 and PPT1. Interacts with S100A1; this interaction increases F1-ATPase activity. Interacts with MTLN. Interacts with TTC5/STRAP; the interaction results in decreased mitochondrial ATP production. Acetylation of Lys-133 is observed in liver mitochondria from fasted mice but not from fed mice.

The protein resides in the mitochondrion inner membrane. It catalyses the reaction ATP + H2O + 4 H(+)(in) = ADP + phosphate + 5 H(+)(out). Functionally, catalytic subunit beta, of the mitochondrial membrane ATP synthase complex (F(1)F(0) ATP synthase or Complex V) that produces ATP from ADP in the presence of a proton gradient across the membrane which is generated by electron transport complexes of the respiratory chain. ATP synthase complex consist of a soluble F(1) head domain - the catalytic core - and a membrane F(1) domain - the membrane proton channel. These two domains are linked by a central stalk rotating inside the F(1) region and a stationary peripheral stalk. During catalysis, ATP synthesis in the catalytic domain of F(1) is coupled via a rotary mechanism of the central stalk subunits to proton translocation. In vivo, can only synthesize ATP although its ATP hydrolase activity can be activated artificially in vitro. With the subunit alpha (ATP5F1A), forms the catalytic core in the F(1) domain. This chain is ATP synthase F(1) complex catalytic subunit beta, mitochondrial, found in Mus musculus (Mouse).